The chain runs to 338 residues: uncharacterized protein (338 aa).

A signal peptide spans 1–29 (MIKQLYKNITICTLALSTTFTVLPATSYA).

Belongs to the aerolysin family.

This is an uncharacterized protein from Staphylococcus aureus (strain MSSA476).